The following is a 206-amino-acid chain: Uridine kinase (206 aa).

ATP is bound at residue 11 to 18; sequence GGTGSGKS.

It belongs to the uridine kinase family.

The protein resides in the cytoplasm. The enzyme catalyses uridine + ATP = UMP + ADP + H(+). It catalyses the reaction cytidine + ATP = CMP + ADP + H(+). Its pathway is pyrimidine metabolism; CTP biosynthesis via salvage pathway; CTP from cytidine: step 1/3. It functions in the pathway pyrimidine metabolism; UMP biosynthesis via salvage pathway; UMP from uridine: step 1/1. The protein is Uridine kinase of Clostridium botulinum (strain 657 / Type Ba4).